We begin with the raw amino-acid sequence, 254 residues long: UDP-2,3-diacylglucosamine hydrolase (254 aa).

Positions 8, 10, 41, 79, and 114 each coordinate Mn(2+). 79–80 (NR) is a substrate binding site. Positions 122, 160, 164, 167, and 195 each coordinate substrate. Positions 195 and 197 each coordinate Mn(2+).

It belongs to the LpxH family. Mn(2+) is required as a cofactor.

It localises to the cell inner membrane. It carries out the reaction UDP-2-N,3-O-bis[(3R)-3-hydroxytetradecanoyl]-alpha-D-glucosamine + H2O = 2-N,3-O-bis[(3R)-3-hydroxytetradecanoyl]-alpha-D-glucosaminyl 1-phosphate + UMP + 2 H(+). The protein operates within glycolipid biosynthesis; lipid IV(A) biosynthesis; lipid IV(A) from (3R)-3-hydroxytetradecanoyl-[acyl-carrier-protein] and UDP-N-acetyl-alpha-D-glucosamine: step 4/6. Functionally, hydrolyzes the pyrophosphate bond of UDP-2,3-diacylglucosamine to yield 2,3-diacylglucosamine 1-phosphate (lipid X) and UMP by catalyzing the attack of water at the alpha-P atom. Involved in the biosynthesis of lipid A, a phosphorylated glycolipid that anchors the lipopolysaccharide to the outer membrane of the cell. In Aeromonas salmonicida (strain A449), this protein is UDP-2,3-diacylglucosamine hydrolase.